The following is a 265-amino-acid chain: Aquaporin-5 (265 aa).

The Cytoplasmic segment spans residues 1–12 (MKKEVCSLAFFK). Residues 13 to 33 (AVFAEFLATLIFVFFGLGSAL) traverse the membrane as a helical segment. Residues 34–39 (KWPSAL) lie on the Extracellular side of the membrane. The chain crosses the membrane as a helical span at residues 40–60 (PTILQISIAFGLAIGTLAQAL). Topologically, residues 61–65 (GPVSG) are cytoplasmic. Residues 66 to 74 (GHINPAITL) constitute an intramembrane region (discontinuously helical). The short motif at 69–71 (NPA) is the NPA 1 element. Residues 75–87 (ALLIGNQISLLRA) lie on the Cytoplasmic side of the membrane. A helical transmembrane segment spans residues 88–108 (VFYVAAQLVGAIAGAGILYWL). Topologically, residues 109-126 (APLNARGNLAVNALNNNT) are extracellular. Asn-124 carries N-linked (GlcNAc...) asparagine glycosylation. The helical transmembrane segment at 127–147 (TPGKAMVVELILTFQLALCIF) threads the bilayer. Topologically, residues 148 to 158 (SSTDSRRTSPV) are cytoplasmic. A helical membrane pass occupies residues 159–179 (GSPALSIGLSVTLGHLVGIYF). Thr-180 is a topological domain (extracellular). The discontinuously helical intramembrane region spans 181 to 191 (GCSMNPARSFG). An NPA 2 motif is present at residues 185–187 (NPA). Over 192–203 (PAVVMNRFSPSH) the chain is Extracellular. A helical membrane pass occupies residues 204–224 (WVFWVGPIVGAMLAAILYFYL). Residues 225–265 (LFPSSLSLHDRVAVVKGTYEPEEDWEDHREERKKTIELTAH) lie on the Cytoplasmic side of the membrane.

The protein belongs to the MIP/aquaporin (TC 1.A.8) family. In terms of assembly, homotetramer; each monomer provides an independent water pore. Interacts with TRPV4; the interaction is probably indirect and regulates TRPV4 activation by hypotonicity. Salivary glands, lacrimal glands, corneal epithelium in eye, trachea and lung.

The protein resides in the apical cell membrane. The protein localises to the cell membrane. Its subcellular location is the cytoplasmic vesicle membrane. The enzyme catalyses H2O(in) = H2O(out). Its function is as follows. Aquaporins form homotetrameric transmembrane channels, with each monomer independently mediating water transport across the plasma membrane along its osmotic gradient. Plays an important role in fluid secretion in salivary glands. Required for TRPV4 activation by hypotonicity. Together with TRPV4, controls regulatory volume decrease in salivary epithelial cells. Seems to play a redundant role in water transport in the eye, lung and in sweat glands. The sequence is that of Aquaporin-5 from Rattus norvegicus (Rat).